A 1006-amino-acid chain; its full sequence is MTELKKIPSPSHPADEGGNTIEARFAHFSKNDLRLDDDKFLAQATKLLDESKHLLMANVPALGTGTLDEAERYWFAFVLYSVRKLSENGDSVEKGLNLCQILRAARLNIDDFYKELYQFLIKVGSILSNLYGGDWQKRLEAKESHTNFVHLFCLSKKYKNAYRELFSIVNANNDKQLNVANASGCESDYYRFGWLLFLALRVHVFRPCKTLVSCTHGLVSVLAILLIHVPAHFRNLNLNDSERIVMRGDKADLVASLCNMYGTSEDELRKTLEKANNLITDILKKKPCLASECKPANLENIVTDGLVYFEGLMDESSLSSSIYLLEKDYDAATHDMDGLDEMIFLNENDSLLGSGSLSGGATNSYGNGTKRKLDAMSSPAKTITSPLSPHRSPICHSNGFIVGGISKMASTPVTTAMTTAKWLRTVIAPLPSKPSAELEKFLTSCDRDVTPDVTRRAQIILEAIFPSSGLGQNASLMDNIWAEQRRMEAMKLYFRVLQALCTAESQILHANNLTSLLTNERFHRCMLACSAELVLATHKTVTMLFPTVLERTGITAFDLSKVIESFIRHEESLPRELRRHLNSLEERLLESMVWEKGSSMYNSLIVARPALSAEISRLGLLAEPMPSLDAIAMHNNMSCGVLPPMQALLKHEKHGQNGDIRSPKRVCTEYRSVLVERNSFTSPVKDRLLALNNLKSKFPPPILHSAFASPTRPSPGGGGETCAETAVNVFFSKIVKLAAVRINGMVERLQLSQQIRESVYCLFQKILSQRTTLFFNRHIDQILLCCFYGVSKISQLTLTFKEIIFNYRKQPQCKPQVFRNVYVDWKALRRTGKSGPDHVDIITFYNEIFVPAVKPLLVEIAPGGSAQSGSQVPEAKNNTNGVNPSSPRTSSFPSLPDMSPKKVSAAHNVYVSPLRSSKMDALISHSSRSYYACVGESTHAYQSPSKDLTAINNRLNGNRKVRGTLNFDDVDVGLVTDSVVANSLYVQNGSCASSSHMVVKSEQQDS.

The tract at residues 411–604 (TPVTTAMTTA…EKGSSMYNSL (194 aa)) is domain A. The tract at residues 411–855 (TPVTTAMTTA…NEIFVPAVKP (445 aa)) is pocket. A spacer region spans residues 605 to 724 (IVARPALSAE…PGGGGETCAE (120 aa)). The domain B stretch occupies residues 725 to 855 (TAVNVFFSKI…NEIFVPAVKP (131 aa)). The segment covering 866–893 (AQSGSQVPEAKNNTNGVNPSSPRTSSFP) has biased composition (polar residues). The tract at residues 866–898 (AQSGSQVPEAKNNTNGVNPSSPRTSSFPSLPDM) is disordered.

Belongs to the retinoblastoma protein (RB) family.

Its subcellular location is the nucleus. Its function is as follows. Regulator of biological processes that recruits a histone deacetylase to control gene transcription. May play a role in the entry into mitosis, negatively regulating the cell proliferation. Formation of stable complexes with geminiviridae replication-associated proteins may create a cellular environment which favors viral DNA replication. This is Retinoblastoma-related protein (RB) from Scutellaria baicalensis (Baical skullcap).